Reading from the N-terminus, the 309-residue chain is tRNA uridine(34) hydroxylase (309 aa).

In terms of domain architecture, Rhodanese spans 130–224; that stretch reads SDPDTIVIDT…YLEEVPQEES (95 aa). Catalysis depends on Cys-184, which acts as the Cysteine persulfide intermediate.

It belongs to the TrhO family.

It catalyses the reaction uridine(34) in tRNA + AH2 + O2 = 5-hydroxyuridine(34) in tRNA + A + H2O. Its function is as follows. Catalyzes oxygen-dependent 5-hydroxyuridine (ho5U) modification at position 34 in tRNAs. This chain is tRNA uridine(34) hydroxylase, found in Rhizobium johnstonii (strain DSM 114642 / LMG 32736 / 3841) (Rhizobium leguminosarum bv. viciae).